The chain runs to 382 residues: MSTYTRPVMLLLSGLLLLTLAIAVLNTLVPLWLAQEHMSTWQVGVVSSSYFTGNLVGTLLTGYVIKRIGFNRSYYLASFIFAAGCAGLGLMIGFWSWLTWRFVAGVGCAMIWVVVESALMCSGTSRNRGRLLAAYMMVYYVGTFLGQLLVSKVSTELMSVLPWVTGLTLAGILPLLFTRVLNQQAENHDSTSITSMLKLRQARLGVNGCIISGIVLGSLYGLMPLFLNHKGVSNASIGFWMAVLVSAGILGQWPIGRLADKFGRLLVLRVQVFVVILGSIAMLSQAAMAPALFILGAAGFTLYPVAMAWACEKVEHHQLVAMNQALLLSYTVGSLLGPSFTAMLMQNFSDNLLFIMIASVSFIYLLMLLRNAGHTPKPVAHV.

A run of 12 helical transmembrane segments spans residues 14-34, 45-65, 75-95, 102-122, 131-151, 157-177, 206-226, 235-255, 270-290, 291-311, 325-345, and 348-368; these read GLLL…LWLA, VVSS…GYVI, YLAS…IGFW, FVAG…LMCS, LLAA…LLVS, LMSV…PLLF, VNGC…MPLF, ASIG…QWPI, VQVF…AMAP, ALFI…AWAC, ALLL…AMLM, and FSDN…LLML.

It belongs to the major facilitator superfamily. YcaD (TC 2.A.1.26) family.

It localises to the cell inner membrane. This is an uncharacterized protein from Escherichia coli O17:K52:H18 (strain UMN026 / ExPEC).